The chain runs to 90 residues: Cell division topological specificity factor (90 aa).

This sequence belongs to the MinE family.

In terms of biological role, prevents the cell division inhibition by proteins MinC and MinD at internal division sites while permitting inhibition at polar sites. This ensures cell division at the proper site by restricting the formation of a division septum at the midpoint of the long axis of the cell. The sequence is that of Cell division topological specificity factor from Francisella tularensis subsp. tularensis (strain FSC 198).